The primary structure comprises 167 residues: uncharacterized protein (167 aa).

This is an uncharacterized protein from Aquifex aeolicus (strain VF5).